Consider the following 776-residue polypeptide: Mitochondrial intermediate peptidase (776 aa).

Residues 1–38 constitute a mitochondrion transit peptide; it reads MLNSARTVLARHSARQLYRFRGCLVHQQRHRHQVQRTL. A Zn(2+)-binding site is contributed by H560. E561 is a catalytic residue. Residues H564 and H567 each coordinate Zn(2+).

The protein belongs to the peptidase M3 family. Requires Zn(2+) as cofactor.

The protein localises to the mitochondrion matrix. The enzyme catalyses Release of an N-terminal octapeptide as second stage of processing of some proteins imported into the mitochondrion.. Functionally, cleaves proteins, imported into the mitochondrion, to their mature size. While most mitochondrial precursor proteins are processed to the mature form in one step by mitochondrial processing peptidase (MPP), the sequential cleavage by MIP of an octapeptide after initial processing by MPP is a required step for a subgroup of nuclear-encoded precursor proteins destined for the matrix or the inner membrane. The protein is Mitochondrial intermediate peptidase (OCT1) of Coprinopsis cinerea (strain Okayama-7 / 130 / ATCC MYA-4618 / FGSC 9003) (Inky cap fungus).